The primary structure comprises 149 residues: Transcriptional repressor NrdR (149 aa).

The segment at 3–34 (CPFCSAVDTKVIDSRLVGEGTQVRRRRQCVIC) is a zinc-finger region. An ATP-cone domain is found at 49–139 (PRVIKSNDVR…VYRSFEDIRE (91 aa)).

It belongs to the NrdR family. It depends on Zn(2+) as a cofactor.

Negatively regulates transcription of bacterial ribonucleotide reductase nrd genes and operons by binding to NrdR-boxes. The protein is Transcriptional repressor NrdR of Sodalis glossinidius (strain morsitans).